Here is a 295-residue protein sequence, read N- to C-terminus: Acetylglutamate kinase (295 aa).

Substrate contacts are provided by residues 64 to 65 (GG), arginine 86, and asparagine 190.

It belongs to the acetylglutamate kinase family. ArgB subfamily.

It is found in the cytoplasm. The catalysed reaction is N-acetyl-L-glutamate + ATP = N-acetyl-L-glutamyl 5-phosphate + ADP. It functions in the pathway amino-acid biosynthesis; L-arginine biosynthesis; N(2)-acetyl-L-ornithine from L-glutamate: step 2/4. Catalyzes the ATP-dependent phosphorylation of N-acetyl-L-glutamate. This Pelotomaculum thermopropionicum (strain DSM 13744 / JCM 10971 / SI) protein is Acetylglutamate kinase.